The chain runs to 693 residues: Elongation factor G (693 aa).

Residues 8-282 (AKTRNIGIMA…AVIDYLPSPL (275 aa)) form the tr-type G domain. GTP-binding positions include 17–24 (AHVDAGKT), 81–85 (DTPGH), and 135–138 (NKMD).

This sequence belongs to the TRAFAC class translation factor GTPase superfamily. Classic translation factor GTPase family. EF-G/EF-2 subfamily.

Its subcellular location is the cytoplasm. Its function is as follows. Catalyzes the GTP-dependent ribosomal translocation step during translation elongation. During this step, the ribosome changes from the pre-translocational (PRE) to the post-translocational (POST) state as the newly formed A-site-bound peptidyl-tRNA and P-site-bound deacylated tRNA move to the P and E sites, respectively. Catalyzes the coordinated movement of the two tRNA molecules, the mRNA and conformational changes in the ribosome. The chain is Elongation factor G from Streptococcus thermophilus (strain CNRZ 1066).